The sequence spans 223 residues: Kinetochore protein Spc25 (223 aa).

The stretch at L65–S115 forms a coiled coil.

Belongs to the SPC25 family. As to quaternary structure, component of the Ndc80 complex, which is composed of Ndc80, Nuf2 and Spc25.

It is found in the nucleus. The protein resides in the chromosome. Its subcellular location is the centromere. The protein localises to the kinetochore. Acts as a component of the essential kinetochore-associated Ndc80 complex, which is required for chromosome segregation and spindle checkpoint activity during meiosis and mitosis. Required for kinetochore integrity and the organization of stable microtubule binding sites in the outer plate of the kinetochore. Participates in SAC signaling that responds specifically to disruptions in spindle microtubule dynamics. The NDC80 complex synergistically enhances the affinity of the SKA1 complex for microtubules and may allow the NDC80 complex to track depolymerizing microtubules. This is Kinetochore protein Spc25 from Drosophila lutescens (Fruit fly).